The following is a 260-amino-acid chain: Adenosylcobinamide-GDP ribazoletransferase (260 aa).

6 helical membrane passes run 7–27, 45–65, 117–137, 145–165, 187–207, and 210–230; these read WYFLWGGDSVGAAILFYTRLP, LMGLLLSLILLALDRGLHWLG, AYGVMAIAVVLLLKTFALASF, WALIMALGWGRWGQLLAIALY, LLLGTMIIVFGGVGMGYALAI, and WLILGATGSSALIAWAVGRWF.

The protein belongs to the CobS family. It depends on Mg(2+) as a cofactor.

The protein localises to the cell inner membrane. It catalyses the reaction alpha-ribazole + adenosylcob(III)inamide-GDP = adenosylcob(III)alamin + GMP + H(+). It carries out the reaction alpha-ribazole 5'-phosphate + adenosylcob(III)inamide-GDP = adenosylcob(III)alamin 5'-phosphate + GMP + H(+). The protein operates within cofactor biosynthesis; adenosylcobalamin biosynthesis; adenosylcobalamin from cob(II)yrinate a,c-diamide: step 7/7. Its function is as follows. Joins adenosylcobinamide-GDP and alpha-ribazole to generate adenosylcobalamin (Ado-cobalamin). Also synthesizes adenosylcobalamin 5'-phosphate from adenosylcobinamide-GDP and alpha-ribazole 5'-phosphate. The sequence is that of Adenosylcobinamide-GDP ribazoletransferase from Synechocystis sp. (strain ATCC 27184 / PCC 6803 / Kazusa).